A 332-amino-acid polypeptide reads, in one-letter code: Packaging enzyme P4 (332 aa).

The interval 111–138 is involved in the regulation and mechanisms of transcription, replication and genome packaging; the sequence is RWPSEGIYSGVTALMGATGSGKSITLNE. 126–133 provides a ligand contact to ATP; it reads GATGSGKS. A disordered region spans residues 310–332; sequence LERGSVDTDDRNSAPRRGANFSL. Residues 313–322 show a composition bias toward basic and acidic residues; it reads GSVDTDDRNS.

As to quaternary structure, homohexamer. Part of the packaging complex composed of RDRP, P4 and P7.

The protein localises to the virion. The catalysed reaction is a ribonucleoside 5'-triphosphate + H2O = a ribonucleoside 5'-diphosphate + phosphate + H(+). Its function is as follows. Packaging motor with helicase and translocase activities. Part of the packaging complex that packages the viral RNA segments, replicate them into a double-stranded form and transcribe them. is one of the structural proteins of the polyhedral procapsid, which is responsible for genomic replication and transcription. Displays single-stranded RNA-stimulated NTPase activity. The sequence is that of Packaging enzyme P4 (P4) from Pseudomonas savastanoi pv. phaseolicola (Pseudomonas syringae pv. phaseolicola).